The primary structure comprises 335 residues: Serpentine receptor class alpha-13 (335 aa).

Topologically, residues 1–22 (MAIVSSENRTCADEKLLALYQS) are extracellular. The chain crosses the membrane as a helical span at residues 23–43 (WSYIASIVFNCLVPTISTYFL). Over 44 to 61 (GRAIFQLCNQATIQYSTR) the chain is Cytoplasmic. Residues 62–82 (ILLIATILFAACHQVSYFAFK) form a helical membrane-spanning segment. Topologically, residues 83-107 (IDLLHTMFFKLDQPCFLQRSSYDCR) are extracellular. A helical membrane pass occupies residues 108–128 (FISIAQTTGVVGMALTGLAMS). Residues 129–149 (TDRALALTFPADYHKLKSVPR) lie on the Cytoplasmic side of the membrane. Residues 150-170 (VVLSVFVFIVSFSTWFLLTMN) traverse the membrane as a helical segment. Topologically, residues 171–192 (DPLTGYLNHCGFYPSYSVANFQ) are extracellular. The helical transmembrane segment at 193 to 213 (LMLDVILYLAIFNLIWDVILF) threads the bilayer. The Cytoplasmic segment spans residues 214-235 (YYARQQILWRRSYQFQKRYEAR). Residues 236-255 (ISLNCTQAVFVISICQCISN) form a helical membrane-spanning segment. The Extracellular segment spans residues 256–278 (GANSGLMRLLMMIGTSITSVTYS). Residues 279-299 (SLLSLFYTAPYSCILLPILMM) form a helical membrane-spanning segment. Over 300–335 (RISEYIREQRTIGILSLRSEKPGLEEHHQRMRAAWS) the chain is Cytoplasmic.

The protein belongs to the nematode receptor-like protein sra family.

It localises to the membrane. Functionally, chemosensory receptor that negatively regulates RAS/MAPK signaling during vulva induction and the negative regulation of olfaction of volitile attractants. Required for the suppression of vulval induction in response to food starvation. Signaling acts through the GPA-5 G-alpha protein subunit. This Caenorhabditis briggsae protein is Serpentine receptor class alpha-13.